We begin with the raw amino-acid sequence, 363 residues long: Dihydroorotate dehydrogenase (quinone) (363 aa).

FMN-binding positions include 70–74 and threonine 94; that span reads AGFDK. Lysine 74 serves as a coordination point for substrate. A substrate-binding site is contributed by 119-123; sequence NRMGF. FMN-binding residues include asparagine 147 and asparagine 180. Position 180 (asparagine 180) interacts with substrate. The active-site Nucleophile is the serine 183. Position 185 (asparagine 185) interacts with substrate. FMN-binding residues include lysine 216 and threonine 244. Residue 245 to 246 coordinates substrate; sequence NT. FMN contacts are provided by residues glycine 270, glycine 299, and 320-321; that span reads YT.

Belongs to the dihydroorotate dehydrogenase family. Type 2 subfamily. Monomer. The cofactor is FMN.

Its subcellular location is the cell membrane. It catalyses the reaction (S)-dihydroorotate + a quinone = orotate + a quinol. The protein operates within pyrimidine metabolism; UMP biosynthesis via de novo pathway; orotate from (S)-dihydroorotate (quinone route): step 1/1. Its function is as follows. Catalyzes the conversion of dihydroorotate to orotate with quinone as electron acceptor. The protein is Dihydroorotate dehydrogenase (quinone) of Corynebacterium diphtheriae (strain ATCC 700971 / NCTC 13129 / Biotype gravis).